The following is a 795-amino-acid chain: Antibiotic resistant DNA gyrase subunit B (795 aa).

The Toprim domain maps to 421–536; that stretch reads SELYLVEGNS…RGYIYIAQPP (116 aa). 3 residues coordinate Mg(2+): Glu-427, Asp-501, and Asp-503.

The protein belongs to the type II topoisomerase GyrB family. As to quaternary structure, heterotetramer, composed of two GyrA and two GyrB chains. In the heterotetramer, GyrA contains the active site tyrosine that forms a transient covalent intermediate with DNA, while GyrB binds cofactors and catalyzes ATP hydrolysis. Requires Mg(2+) as cofactor. Mn(2+) is required as a cofactor. Ca(2+) serves as cofactor.

Its subcellular location is the cytoplasm. The enzyme catalyses ATP-dependent breakage, passage and rejoining of double-stranded DNA.. In terms of biological role, a type II topoisomerase that negatively supercoils closed circular double-stranded (ds) DNA in an ATP-dependent manner to modulate DNA topology and maintain chromosomes in an underwound state. Negative supercoiling favors strand separation, and DNA replication, transcription, recombination and repair, all of which involve strand separation. Also able to catalyze the interconversion of other topological isomers of dsDNA rings, including catenanes and knotted rings. Type II topoisomerases break and join 2 DNA strands simultaneously in an ATP-dependent manner. The polypeptide is Antibiotic resistant DNA gyrase subunit B (Neisseria gonorrhoeae).